We begin with the raw amino-acid sequence, 385 residues long: 1-deoxy-D-xylulose 5-phosphate reductoisomerase (385 aa).

NADPH contacts are provided by Thr-10, Gly-11, Ser-12, Ile-13, Lys-37, and Asn-124. Residue Lys-125 participates in 1-deoxy-D-xylulose 5-phosphate binding. Residue Glu-126 participates in NADPH binding. Asp-150 lines the Mn(2+) pocket. 1-deoxy-D-xylulose 5-phosphate-binding residues include Ser-151, Glu-152, Ser-176, and His-199. Residue Glu-152 participates in Mn(2+) binding. Gly-205 is a binding site for NADPH. Ser-212, Asn-217, Lys-218, and Glu-221 together coordinate 1-deoxy-D-xylulose 5-phosphate. Glu-221 is a Mn(2+) binding site.

It belongs to the DXR family. Requires Mg(2+) as cofactor. The cofactor is Mn(2+).

It carries out the reaction 2-C-methyl-D-erythritol 4-phosphate + NADP(+) = 1-deoxy-D-xylulose 5-phosphate + NADPH + H(+). The protein operates within isoprenoid biosynthesis; isopentenyl diphosphate biosynthesis via DXP pathway; isopentenyl diphosphate from 1-deoxy-D-xylulose 5-phosphate: step 1/6. In terms of biological role, catalyzes the NADPH-dependent rearrangement and reduction of 1-deoxy-D-xylulose-5-phosphate (DXP) to 2-C-methyl-D-erythritol 4-phosphate (MEP). The sequence is that of 1-deoxy-D-xylulose 5-phosphate reductoisomerase from Clostridium novyi (strain NT).